A 637-amino-acid chain; its full sequence is Threonine--tRNA ligase (637 aa).

In terms of domain architecture, TGS spans 1-65; sequence MIAIQLPDGS…EADEALSIIT (65 aa). The catalytic stretch occupies residues 246-537; the sequence is DHRKLGRELD…LIEEHAGALP (292 aa). Zn(2+) is bound by residues cysteine 337, histidine 388, and histidine 514.

This sequence belongs to the class-II aminoacyl-tRNA synthetase family. Homodimer. Zn(2+) is required as a cofactor.

The protein localises to the cytoplasm. It carries out the reaction tRNA(Thr) + L-threonine + ATP = L-threonyl-tRNA(Thr) + AMP + diphosphate + H(+). Catalyzes the attachment of threonine to tRNA(Thr) in a two-step reaction: L-threonine is first activated by ATP to form Thr-AMP and then transferred to the acceptor end of tRNA(Thr). Also edits incorrectly charged L-seryl-tRNA(Thr). The sequence is that of Threonine--tRNA ligase from Leptothrix cholodnii (strain ATCC 51168 / LMG 8142 / SP-6) (Leptothrix discophora (strain SP-6)).